The chain runs to 199 residues: Recombination protein RecR (199 aa).

A C4-type zinc finger spans residues 58–73 (CSRCFYFTEEDPCPLC). The Toprim domain maps to 81-176 (QLICVVEEPQ…KVTRLAHGIP (96 aa)).

Belongs to the RecR family.

Its function is as follows. May play a role in DNA repair. It seems to be involved in an RecBC-independent recombinational process of DNA repair. It may act with RecF and RecO. This is Recombination protein RecR from Syntrophotalea carbinolica (strain DSM 2380 / NBRC 103641 / GraBd1) (Pelobacter carbinolicus).